The chain runs to 423 residues: Cytochrome b mRNA maturase bI2 (423 aa).

Residues 1–31 (MAFRKSNVYLSLVNSYIIDSPQPSSINYWWN) are Mitochondrial matrix-facing. Residues 1–143 (MAFRKSNVYL…CVYGQMSHWG (143 aa)) are cytochrome b. The chain crosses the membrane as a helical span at residues 32-52 (MGSLLGLCLVIQIVTGIFMAM). Residues 53–84 (HYSSNIELAFSSVEHIMRDVHNGYILRYLHAN) lie on the Mitochondrial intermembrane side of the membrane. The helical transmembrane segment at 85 to 105 (GASFFFMVMFMHMAKGLYYGS) threads the bilayer. The Mitochondrial matrix segment spans residues 106-115 (YRSPRVTLWN). The helical transmembrane segment at 116–136 (VGVIIFILTIATAFLGYCCVY) threads the bilayer. Residues 137-153 (GQMSHWGNMNIASNMFN) are Mitochondrial intermembrane-facing. Residues 144 to 423 (NMNIASNMFN…SMKYKLGNYL (280 aa)) are maturase. The helical transmembrane segment at 154 to 174 (MMKTIYMMMLMLLIYIFYTIM) threads the bilayer. Over 175–423 (MRQMMKTKEY…SMKYKLGNYL (249 aa)) the chain is Mitochondrial matrix.

In the N-terminal section; belongs to the cytochrome b family. It in the C-terminal section; belongs to the LAGLIDADG endonuclease family.

The protein localises to the mitochondrion inner membrane. In terms of biological role, this protein is responsible for splicing and maturation of cytochrome b mRNA. Specifically, it may be responsible for the splicing specificity of the second intron. The polypeptide is Cytochrome b mRNA maturase bI2 (BI2) (Saccharomyces cerevisiae (strain ATCC 204508 / S288c) (Baker's yeast)).